Here is an 83-residue protein sequence, read N- to C-terminus: Protein YciN (83 aa).

The polypeptide is Protein YciN (yciN) (Escherichia coli O157:H7).